Reading from the N-terminus, the 534-residue chain is GMP synthase [glutamine-hydrolyzing] (534 aa).

In terms of domain architecture, Glutamine amidotransferase type-1 spans 20-210 (MLIILDFGSQ…VYHICDCEPT (191 aa)). C97 acts as the Nucleophile in catalysis. Active-site residues include H184 and E186. The GMPS ATP-PPase domain maps to 211–409 (WTTETFVEEA…LGLPEEIVKR (199 aa)). 238–244 (SGGVDSS) is an ATP binding site.

As to quaternary structure, homodimer.

The catalysed reaction is XMP + L-glutamine + ATP + H2O = GMP + L-glutamate + AMP + diphosphate + 2 H(+). Its pathway is purine metabolism; GMP biosynthesis; GMP from XMP (L-Gln route): step 1/1. Its function is as follows. Catalyzes the synthesis of GMP from XMP. The protein is GMP synthase [glutamine-hydrolyzing] of Synechococcus sp. (strain ATCC 27144 / PCC 6301 / SAUG 1402/1) (Anacystis nidulans).